We begin with the raw amino-acid sequence, 328 residues long: 2-oxoglutarate-dependent dioxygenase gloF (328 aa).

Positions 175–289 (DTSELRMNHY…RYSVAYFGKP (115 aa)) constitute a Fe2OG dioxygenase domain. Fe cation-binding residues include histidine 201, aspartate 203, and histidine 261. Arginine 280 contributes to the 2-oxoglutarate binding site.

This sequence belongs to the iron/ascorbate-dependent oxidoreductase family. It depends on Fe(2+) as a cofactor.

The protein operates within mycotoxin biosynthesis. Functionally, 2-oxoglutarate-dependent dioxygenase; part of the gene cluster that mediates the biosynthesis of pneumocandins, lipohexapeptides of the echinocandin family that prevent fungal cell wall formation by non-competitive inhibition of beta-1,3-glucan synthase. The 10,12-dimethylmyristoyl side chain is synthesized by the reducing polyketide synthase gloL/GLPKS4. The thioesterase gloN/GLHYD exclusively interacts with gloL/GLPKS4 to maintain turnover of the polyketide side chain. The 10R,12S-dimethylmyristic acid is then transferred to the first thiolation domain of the nonribosomal peptide synthetase gloA/GLNRPS4 by the acyl-AMP ligase gloD/GLligase, followed by its acylation to L-ornithine to trigger elongation of the cyclic hexapeptide. L-ornithine, 4R-hydroxyl-L-proline (generated from L-proline by the dioxygenase gloF/GLOXY2), 3S-hydroxyl-L-homotyrosine (generated by gloG/GLHtyB, gloH/GLHtyA, gloI/GLHtyC, gloJ/GLHtyD and hydroxylated at C-3 by the dioxygenase gloM/GLOXY1), 3R-hydroxyl-L-glutamine (generated from L-glutamine probably by the dioxygenase gloE/GLOXY3) and 3S-hydroxyl-L-proline (generated from L-proline by the dioxygenase gloF/GLOXY2 to yield pneumocandin B0), or 3S-hydroxyl-4S-methyl-L-proline (generated from L-leucine by the dioxygenase gloC/GLOXY4 to yield pneumocandin A0) are sequentially added to the growing chain. The last C domain of gloA/GLNRPS4 is proposed to be responsible for cyclization by condensation to form the peptide bond between L-ornithine and 3S-hydroxyl-4S-methyl-L-proline (for pneumocandin A0) or 3S-hydroxyl-L-proline (for pneumocandin B0). Finally, the subsequent C-4 hydroxylation of 3S-hydroxyl-L-homotyrosine and L-ornithine dihydroxylation at C-4 and C-5 are performed by the cytochrome P450 monooxygenases gloP/GLP450-1 and gloO/GLP450-2, respectively. This chain is 2-oxoglutarate-dependent dioxygenase gloF, found in Glarea lozoyensis (strain ATCC 20868 / MF5171).